Here is a 737-residue protein sequence, read N- to C-terminus: Polyribonucleotide nucleotidyltransferase (737 aa).

Mg(2+) contacts are provided by Asp489 and Asp495. The region spanning 556-615 (PKIDTIKIDVDKIKIVIGKGGETIDKIIAETGVKIDIDEEGNVSIYSSDQDAINRAKEII) is the KH domain. The S1 motif domain occupies 625–693 (DEVYRAKVVR…EKGRVDASMK (69 aa)). The segment at 691–737 (SMKALLPRPPKPERDEKGEKSERPYRPRHHKDHKPKKEITETPKDSE) is disordered. Composition is skewed to basic and acidic residues over residues 700–715 (PKPERDEKGEKSERPY) and 725–737 (PKKEITETPKDSE).

The protein belongs to the polyribonucleotide nucleotidyltransferase family. The cofactor is Mg(2+).

Its subcellular location is the cytoplasm. It carries out the reaction RNA(n+1) + phosphate = RNA(n) + a ribonucleoside 5'-diphosphate. Functionally, involved in mRNA degradation. Catalyzes the phosphorolysis of single-stranded polyribonucleotides processively in the 3'- to 5'-direction. The protein is Polyribonucleotide nucleotidyltransferase of Streptococcus pneumoniae (strain Hungary19A-6).